The primary structure comprises 517 residues: Serine hydroxymethyltransferase 2, mitochondrial (517 aa).

Residues 1 to 29 constitute a mitochondrion transit peptide; the sequence is MALALRRLSSSVKKPISLLSSNGGSLRFM. Ser82 serves as a coordination point for L-serine. Pemetrexed is bound by residues Ser82, Tyr102, Glu104, Tyr112, 148–150, and His177; that span reads SGS. Positions 104 and 112 each coordinate L-serine. Glu104 lines the methotrexate pocket. 184–186 provides a ligand contact to methotrexate; that stretch reads TDT. Pemetrexed-binding residues include Ser232 and His260. L-serine is bound by residues His260 and Lys286. Residue Lys286 is modified to N6-(pyridoxal phosphate)lysine. Gly331 lines the pemetrexed pocket. Methotrexate is bound at residue Lys414. L-serine is bound at residue Arg430. Arg430 lines the pemetrexed pocket.

It belongs to the SHMT family. In terms of assembly, homotetramer. The cofactor is pyridoxal 5'-phosphate. Ubiquitous. Mainly expressed in the shoot apical meristem and roots. Also detected in the leaf vasculature, especially in the protoxylem and adjacent cell layers.

The protein resides in the mitochondrion. It catalyses the reaction (6R)-5,10-methylene-5,6,7,8-tetrahydrofolate + glycine + H2O = (6S)-5,6,7,8-tetrahydrofolate + L-serine. It participates in one-carbon metabolism; tetrahydrofolate interconversion. With respect to regulation, inhibited by the antifolate drugs methotrexate and pemetrexed. Functionally, functions outside the photorespiratory pathway in catalyzing the interconversion of serine and glycine with the conversion of tetrahydrofolate (THF) into 5,10-methylene-THF. This is Serine hydroxymethyltransferase 2, mitochondrial from Arabidopsis thaliana (Mouse-ear cress).